A 133-amino-acid chain; its full sequence is Small ribosomal subunit protein uS8 (133 aa).

This sequence belongs to the universal ribosomal protein uS8 family. As to quaternary structure, part of the 30S ribosomal subunit. Contacts proteins S5 and S12.

Its function is as follows. One of the primary rRNA binding proteins, it binds directly to 16S rRNA central domain where it helps coordinate assembly of the platform of the 30S subunit. In Gloeothece citriformis (strain PCC 7424) (Cyanothece sp. (strain PCC 7424)), this protein is Small ribosomal subunit protein uS8.